The following is a 787-amino-acid chain: ABC transporter G family member 5 (787 aa).

Positions 1 to 17 (MSRFVDKLPLFDRRPSP) are enriched in basic and acidic residues. Disordered stretches follow at residues 1-25 (MSRF…EGLP) and 71-116 (NDAR…EGQP). Residues 74–85 (RSGSSTPISSPR) show a composition bias toward polar residues. One can recognise an ABC transporter domain in the interval 121–382 (LKFTDLTYSV…FLDFGKPIPD (262 aa)). ATP is bound at residue 175–182 (GASGSGKS). The region spanning 484–691 (GVLTRRAFIN…PYEAVMQNEF (208 aa)) is the ABC transmembrane type-2 domain. Helical transmembrane passes span 500-520 (VFII…TIFW), 535-555 (FFAI…PVFL), 576-596 (VLSH…AFAL), 599-619 (FFSV…AIVL), 620-640 (ASFW…THVM), 641-661 (LGFP…GFFI), 728-745 (SLGV…GPDF), and 760-780 (LWIT…SLLL).

It belongs to the ABC transporter superfamily. ABCG family. Eye pigment precursor importer (TC 3.A.1.204) subfamily. Expressed in the crown root primordia, endodermis, pericycle and stele in the root, in leaf primordia of main and axillary shoots, and in the vascular cells and leaf epidermis of older leaves.

The protein resides in the cell membrane. Its function is as follows. Essential transporter for growth and development under abiotic stress. Mediates shoot branching by promoting the outgrowth of lateral shoots. Required for salt tolerance via Na/K homeostasis, at least partly by regulating SKC1/OsHKT1;5. Necessary for hypodermal suberization of roots, which contributes to formation of the apoplastic barrier. In Oryza sativa subsp. japonica (Rice), this protein is ABC transporter G family member 5.